A 108-amino-acid chain; its full sequence is Putative membrane protein insertion efficiency factor (108 aa).

This sequence belongs to the UPF0161 family.

It is found in the cell inner membrane. Functionally, could be involved in insertion of integral membrane proteins into the membrane. The polypeptide is Putative membrane protein insertion efficiency factor (Chelativorans sp. (strain BNC1)).